We begin with the raw amino-acid sequence, 66 residues long: MPQLDMSPWPMVIMSMILTLFYITQLKMLNFTFYNTPSSKLSMPHKHKTTWELKWTKIYLPPSMYQ.

A helical membrane pass occupies residues P8–T24. An N6-acetyllysine; alternate modification is found at K54. Position 54 is an N6-succinyllysine; alternate (K54). At K57 the chain carries N6-acetyllysine.

Belongs to the ATPase protein 8 family. In terms of assembly, F-type ATPases have 2 components, CF(1) - the catalytic core - and CF(0) - the membrane proton channel. Component of an ATP synthase complex composed of ATP5PB, ATP5MC1, ATP5F1E, ATP5PD, ATP5ME, ATP5PF, ATP5MF, MT-ATP6, MT-ATP8, ATP5F1A, ATP5F1B, ATP5F1D, ATP5F1C, ATP5PO, ATP5MG, ATP5MK and ATP5MJ. Interacts with PRICKLE3.

The protein resides in the mitochondrion membrane. Functionally, mitochondrial membrane ATP synthase (F(1)F(0) ATP synthase or Complex V) produces ATP from ADP in the presence of a proton gradient across the membrane which is generated by electron transport complexes of the respiratory chain. F-type ATPases consist of two structural domains, F(1) - containing the extramembraneous catalytic core and F(0) - containing the membrane proton channel, linked together by a central stalk and a peripheral stalk. During catalysis, ATP synthesis in the catalytic domain of F(1) is coupled via a rotary mechanism of the central stalk subunits to proton translocation. Part of the complex F(0) domain. Minor subunit located with subunit a in the membrane. This is ATP synthase protein 8 (MT-ATP8) from Alouatta sara (Bolivian red howler monkey).